The primary structure comprises 358 residues: Heme A synthase (358 aa).

8 helical membrane-spanning segments follow: residues 22 to 42 (IQVW…VGGA), 107 to 127 (VLGR…WVTK), 133 to 153 (IFLQ…IGWW), 172 to 192 (LAIH…LSRG), 208 to 228 (FAGW…LVAG), 269 to 289 (FVHR…ALYV), 302 to 322 (AIFL…TLLH), and 324 to 344 (VPIS…CFSV). His271 serves as a coordination point for heme. His332 contributes to the heme binding site.

Belongs to the COX15/CtaA family. Type 2 subfamily. As to quaternary structure, interacts with CtaB. Requires heme b as cofactor.

The protein resides in the cell membrane. It catalyses the reaction Fe(II)-heme o + 2 A + H2O = Fe(II)-heme a + 2 AH2. Its pathway is porphyrin-containing compound metabolism; heme A biosynthesis; heme A from heme O: step 1/1. Functionally, catalyzes the conversion of heme O to heme A by two successive hydroxylations of the methyl group at C8. The first hydroxylation forms heme I, the second hydroxylation results in an unstable dihydroxymethyl group, which spontaneously dehydrates, resulting in the formyl group of heme A. The chain is Heme A synthase from Bartonella bacilliformis (strain ATCC 35685 / KC583 / Herrer 020/F12,63).